A 262-amino-acid chain; its full sequence is Hydroxyethylthiazole kinase (262 aa).

Residue Met44 participates in substrate binding. Positions 118 and 166 each coordinate ATP. Substrate is bound at residue Gly193.

Belongs to the Thz kinase family. Requires Mg(2+) as cofactor.

It carries out the reaction 5-(2-hydroxyethyl)-4-methylthiazole + ATP = 4-methyl-5-(2-phosphooxyethyl)-thiazole + ADP + H(+). It participates in cofactor biosynthesis; thiamine diphosphate biosynthesis; 4-methyl-5-(2-phosphoethyl)-thiazole from 5-(2-hydroxyethyl)-4-methylthiazole: step 1/1. In terms of biological role, catalyzes the phosphorylation of the hydroxyl group of 4-methyl-5-beta-hydroxyethylthiazole (THZ). The protein is Hydroxyethylthiazole kinase of Chlamydia caviae (strain ATCC VR-813 / DSM 19441 / 03DC25 / GPIC) (Chlamydophila caviae).